Here is a 119-residue protein sequence, read N- to C-terminus: uncharacterized protein (119 aa).

The signal sequence occupies residues 1-18 (MPAVFMLASSSALQCGRG). The tract at residues 23 to 100 (PRTEVGAGHS…MFPGPLRGPA (78 aa)) is disordered. Residues 43 to 71 (GNQTSVIPATSRQAALGTSWTQRRTQPLQ) are compositionally biased toward polar residues. An N-linked (GlcNAc...) asparagine glycan is attached at asparagine 44.

It is found in the secreted. This is an uncharacterized protein from Homo sapiens (Human).